A 769-amino-acid polypeptide reads, in one-letter code: METRPAERVFSNGDVYSGQLKGTLPHGKGKYAWPDGIIYEGDWEEGKISGRGKLMWSSGAKYEGDFSGGYLHGFGTLTSPDGSVYAGAWRMNVRHGLGRKEYCNSDVYDGSWREGLQDGSGSYSWYNGNRFIGNWKKGKMSGRGVMSWANGDLFNGFWLNGLRHGSGVYKYADGGFYFGTWSRGLKDGSGVFYPAGSKHPSLKKWHRHFGYDDTGNFLLSHNSTINIDDLRTSKAVSRSLSELTTTSGLTRTSERYPDDYWSTSDPPRDFMHHGPSSKSARSVDSGQSEIRDKNPIVFEREYMQGVLIKERIMSSIDMSHRARPLNLTKEVTVSACVSFLGGKWNHYLMLNLQLGIRYTVGKITPVPPREVRASDFSERARIMMFFPRNGSQYTPPHKSIDFDWKDYCPMVFRNLREMFKLDAADYMMSICGDDGLREISSPGKSGSIFYLSHDDRFVIKTLKRSELKVLLRMLPRYYEHVGDYENTLITKFFGVHRIKLKWGKKVRFVVMGNMFCTELKIHRRYDLKGSTQGRYTEKNKIGEKTTLKDLDLAYEFHMDKLLREALFKQIILDCSFLESLQILDYSLLLGLHFRAPDPLTDILEPPNEMSDQESDSVGSVDVNLPREPSIPPKGLLMVTHEPNSVNTAPGPHIRGSTLRAFSVGEKEVDLILPGTARLRVQLGVNMPAQAHHKLGQDNEESGTVELFEVYDVVVYMGIIDILQEYNMKKKVEHTCKSMKYDPMTISAIEPTLYSKRFIDFLLKVFPEKA.

8 MORN repeats span residues 16-38 (YSGQ…DGII), 39-61 (YEGD…SGAK), 62-84 (YEGD…DGSV), 85-107 (YAGA…NSDV), 108-130 (YDGS…NGNR), 131-153 (FIGN…NGDL), 154-176 (FNGF…DGGF), and 177-198 (YFGT…AGSK). A disordered region spans residues 266–289 (PPRDFMHHGPSSKSARSVDSGQSE). Residues 276-288 (SSKSARSVDSGQS) are compositionally biased toward polar residues. The PIPK domain maps to 344–765 (WNHYLMLNLQ…RFIDFLLKVF (422 aa)). The tract at residues 725 to 746 (YNMKKKVEHTCKSMKYDPMTIS) is activation loop.

The enzyme catalyses a 1,2-diacyl-sn-glycero-3-phospho-(1D-myo-inositol 4-phosphate) + ATP = a 1,2-diacyl-sn-glycero-3-phospho-(1D-myo-inositol-4,5-bisphosphate) + ADP + H(+). The protein is Phosphatidylinositol 4-phosphate 5-kinase 8 (PIP5K8) of Arabidopsis thaliana (Mouse-ear cress).